The chain runs to 94 residues: Small ribosomal subunit protein uS19 (94 aa).

Belongs to the universal ribosomal protein uS19 family.

Its function is as follows. Protein S19 forms a complex with S13 that binds strongly to the 16S ribosomal RNA. This chain is Small ribosomal subunit protein uS19, found in Wolbachia pipientis wMel.